We begin with the raw amino-acid sequence, 352 residues long: Probable protein kinase DDB_G0291842 (352 aa).

The interval 1 to 57 (MRPLPDQSAFEDKSELVSKKQKNEDENNENRSPETPRTPKVCPKTPTKTPLRTPTKN) is disordered. Positions 10–34 (FEDKSELVSKKQKNEDENNENRSPE) are enriched in basic and acidic residues. A compositionally biased stretch (low complexity) spans 38–56 (TPKVCPKTPTKTPLRTPTK). One can recognise a Protein kinase domain in the interval 77 to 331 (FEYINQIGEG…IQSLLKYDKL (255 aa)). ATP-binding positions include 83 to 91 (IGEGSFAKV) and lysine 106. Aspartate 207 (proton acceptor) is an active-site residue. Mg(2+) is bound by residues asparagine 212 and aspartate 225.

The protein belongs to the protein kinase superfamily. Ser/Thr protein kinase family. WEE1 subfamily.

The enzyme catalyses L-seryl-[protein] + ATP = O-phospho-L-seryl-[protein] + ADP + H(+). It carries out the reaction L-threonyl-[protein] + ATP = O-phospho-L-threonyl-[protein] + ADP + H(+). This chain is Probable protein kinase DDB_G0291842, found in Dictyostelium discoideum (Social amoeba).